Reading from the N-terminus, the 402-residue chain is Tryptophan synthase beta chain (402 aa).

Residue lysine 91 is modified to N6-(pyridoxal phosphate)lysine.

The protein belongs to the TrpB family. In terms of assembly, tetramer of two alpha and two beta chains. The cofactor is pyridoxal 5'-phosphate.

It carries out the reaction (1S,2R)-1-C-(indol-3-yl)glycerol 3-phosphate + L-serine = D-glyceraldehyde 3-phosphate + L-tryptophan + H2O. The protein operates within amino-acid biosynthesis; L-tryptophan biosynthesis; L-tryptophan from chorismate: step 5/5. Functionally, the beta subunit is responsible for the synthesis of L-tryptophan from indole and L-serine. The sequence is that of Tryptophan synthase beta chain (trpB) from Lactococcus lactis subsp. lactis (strain IL1403) (Streptococcus lactis).